The chain runs to 57 residues: UPF0391 membrane protein Patl_0263 (57 aa).

The next 2 membrane-spanning stretches (helical) occupy residues 8–28 and 30–50; these read FFVL…GVAA and IAKV…VLAF.

It belongs to the UPF0391 family.

The protein resides in the cell membrane. In Pseudoalteromonas atlantica (strain T6c / ATCC BAA-1087), this protein is UPF0391 membrane protein Patl_0263.